The chain runs to 872 residues: MSFDWLNVPGLDLSSGDQAEKRPSNGLGPPSVSFDFGINTAAPHDSSFWDQGSRSHSDTTLSYRNNHSNTAADNATNVSSPQKDNPPNGEVRTLSGGDVYAESPEDMQVPLSLSQNQLTHEEIRTYLRWYHYICLRTHGKLVRLNDVFRFLTNFNLSQKVKDRIVEIFRSCKNALNIGQFFAVLRLVSRAIIYGILPLRRMILEKAPVPKPRPILSSENHEEVYEEVEDDDSSAKTGDQKVDFDSFASLLLTGKTTRKRVRRRIKNLNFKSKKVRFSEHITFQDPPNLNQESSNNSEARKQDPDAEDEDQDSNNDSPLDFTLPMDQLLKRLYKRRKNSGLVSSLPSEQQETEEEKKVLEDMKDSLSHFKQIQTVDSASLPISSVFLQNGNTLPTSNVNNTTVPQQLPLEPLKPTATGSANHLVREEYNQGLHPSNGAIQTGLQPLKPTATGSANYLMRSHMEQPQSIKPSSTPETVTNSGGLQPLKPTATGSANYLMKQHISPSVNNPVSSMFQAQFTNQSSSPQSTGPAFLNSPNITLPQSNQQQPYQEVNPTQAKIEPSNISPQHTYSNNVRINNGNIVSMPKVEITGAFPPQNTLPQHQQSHLLSPQNTIPQHQRSQLISPQNTFTQNQPILSPQHTYSNNQATMISPQNTYTNNQQQPQHLPPPPPPRAQQQQQGAIVPPQHMYSNVQKQNNLVPTQPSYTNSPSIQSPNFLSPQNAANSYFQSLLSSSPSPNPTPSNASTVNGNNASNGISSFQNTSAAMNNTQSHQTYIQQQQQQQTQQRIYGGQLSQMQQHPGQLHLNNSDIHSQPNKPNYGMLGQQVHQQQQQQQQQFPFTADVNRSNSSDILGNLQSLQQQVDALQIQYNRRP.

Disordered regions lie at residues 1–98 (MSFD…SGGD) and 209–239 (PKPR…TGDQ). Residues 48 to 85 (FWDQGSRSHSDTTLSYRNNHSNTAADNATNVSSPQKDN) show a composition bias toward polar residues. The KKRVK motif; Required for interaction with GLC7, endocytosis and actin cytoskeleton organization motif lies at 272-276 (KKVRF). Disordered regions lie at residues 280–321 (ITFQ…LDFT) and 338–358 (SGLV…KKVL). Polar residues-rich tracts occupy residues 284 to 296 (DPPN…SNNS) and 339 to 348 (GLVSSLPSEQ). 12 tandem repeats follow at residues 405–424 (QLPL…HLVR), 439–458 (QTGL…YLMR), 479–498 (SGGL…YLMK), 534–545 (SPNITLPQSNQQ), 564–575 (SPQHTYSNNVRI), 593–604 (PPQNTLPQHQQS), 608–619 (SPQNTIPQHQRS), 623–634 (SPQNTFTQNQPI), 636–647 (SPQHTYSNNQAT), 650–661 (SPQNTYTNNQQQ), 683–694 (PPQHMYSNVQKQ), and 717–728 (SPQNAANSYFQS). A 3 X 20 AA approximate repeats region spans residues 405–448 (QLPLEPLKPTATGSANHLVREEYNQGLHPSNGAIQTGLQPLKPT). A phosphothreonine; by PRK1 mark is found at T416 and T450. The interval 460 to 489 (HMEQPQSIKPSSTPETVTNSGGLQPLKPTA) is disordered. Over residues 462-481 (EQPQSIKPSSTPETVTNSGG) the composition is skewed to polar residues. T490 is modified (phosphothreonine; by PRK1). Disordered stretches follow at residues 516–571 (QFTN…TYSN) and 591–620 (AFPP…QRSQ). The 9 X 12 AA approximate repeats stretch occupies residues 534–728 (SPNITLPQSN…QNAANSYFQS (195 aa)). Phosphoserine is present on S564. Positions 594 to 620 (PQNTLPQHQQSHLLSPQNTIPQHQRSQ) are enriched in polar residues. The segment at 649–681 (ISPQNTYTNNQQQPQHLPPPPPPRAQQQQQGAI) is disordered. Positions 651-663 (PQNTYTNNQQQPQ) are enriched in low complexity. Positions 697–727 (LVPTQPSYTNSPSIQSPNFLSPQNAANSYFQ) are enriched in polar residues. Disordered stretches follow at residues 697-758 (LVPT…ISSF) and 806-838 (NSDI…QFPF). The span at 728-745 (SLLSSSPSPNPTPSNAST) shows a compositional bias: low complexity. 2 stretches are compositionally biased toward polar residues: residues 746-758 (VNGN…ISSF) and 806-815 (NSDIHSQPNK). Positions 823-835 (QQVHQQQQQQQQQ) are enriched in low complexity.

Interacts (via KKVRF motif) with phosphatase GLC7. Post-translationally, phosphorylation by PRK1 and/or AKL1 on Thr-416, Thr-450 and Thr-490 of repeats 1-1, 1-2 and/or 1-3 negatively regulates SCD5 function in endocytosis and actin cytoskeleton organization.

The protein resides in the membrane. Its function is as follows. Regulates both fluid phase and receptor-mediated endocytosis. Involved in vesicular transport at a late stage of the secretory pathway. Regulates actin cytoskeleton organization. This chain is Protein SCD5 (SCD5), found in Saccharomyces cerevisiae (strain ATCC 204508 / S288c) (Baker's yeast).